A 512-amino-acid polypeptide reads, in one-letter code: MTDKLIIFDTTLRDGEQSPGASMTRDEKLRIARQLERLRVDVIEAGFAASSNGDFESVQAIARAVKDSTVCSLARANDRDIARAAEALKEANRARIHTFIATSALHMEKKLRMTPEQVLEQARQAVRFARNLVEDIEFSPEDGYRSDPDFLCRVIETVIAEGATTINVPDTVGYAIPELYGNFIKNLRERIPNSDKAIWSVHCHNDLGMAVANSLAGVKIGGARQVECTINGLGERAGNCSLEEVVMAVKTRRDYFGLDVGIDTQHIVAASRMVSQTTGFVVQPNKAVVGANAFAHASGIHQDGVLKARDTYEIMRAEDVGWSANKIVLGKLSGRNAFKQRLQELGVQLESEGEINVAFAKFKELADRKSEIFDEDILALVSDESVTSEKEQFGFVSLAQHSETGERPEATIVFTVDGKEVRSSAEGNGPVDASMKAIEAHVRSGAEMVLYSVNAISGSTESQGEVTVRLQSAGRVVNGVGADPDIVVASAKAYLSALNKLQSKAERVAAQG.

Residues 5–268 (LIIFDTTLRD…DVGIDTQHIV (264 aa)) form the Pyruvate carboxyltransferase domain. 4 residues coordinate Mn(2+): aspartate 14, histidine 202, histidine 204, and asparagine 239. The interval 394–512 (GFVSLAQHSE…SKAERVAAQG (119 aa)) is regulatory domain.

This sequence belongs to the alpha-IPM synthase/homocitrate synthase family. LeuA type 1 subfamily. Homodimer. Requires Mn(2+) as cofactor.

Its subcellular location is the cytoplasm. The catalysed reaction is 3-methyl-2-oxobutanoate + acetyl-CoA + H2O = (2S)-2-isopropylmalate + CoA + H(+). Its pathway is amino-acid biosynthesis; L-leucine biosynthesis; L-leucine from 3-methyl-2-oxobutanoate: step 1/4. In terms of biological role, catalyzes the condensation of the acetyl group of acetyl-CoA with 3-methyl-2-oxobutanoate (2-ketoisovalerate) to form 3-carboxy-3-hydroxy-4-methylpentanoate (2-isopropylmalate). This chain is 2-isopropylmalate synthase, found in Acidovorax ebreus (strain TPSY) (Diaphorobacter sp. (strain TPSY)).